The following is a 319-amino-acid chain: MNLCLDSLLNGTQDPKAFGRVAVLFGGKSAEREVSLKSGAMVLQSLLAAGVDAFGIDVGEDLLQRLVEEKIDRAFIILHGRGGEDGSMQGLLECAGIPYTGSGVLASALAMDKLRTKRVWLSLGLPTPDYAVLASEDDCREAAQRLGFPLIVKPAHEGSSIGMAKVGGLDELIAAWREAARYDSQVLVEQWISGPEFTVATLRGQVLPAIRLGTPHTFYDYDAKYLASDTRYQVPCGLDEAKERELKELTARACDALGIQGWGRADVMQDAEGRFWLLEVNTAPGMTDHSLVPMAARAAGLDFQQLVLAILADSREARG.

The ATP-grasp domain occupies 117–312; sequence KRVWLSLGLP…FQQLVLAILA (196 aa). 143–198 is a binding site for ATP; it reads AQRLGFPLIVKPAHEGSSIGMAKVGGLDELIAAWREAARYDSQVLVEQWISGPEFT. Asp-266, Glu-279, and Asn-281 together coordinate Mg(2+).

Belongs to the D-alanine--D-alanine ligase family. It depends on Mg(2+) as a cofactor. Mn(2+) is required as a cofactor.

Its subcellular location is the cytoplasm. The enzyme catalyses 2 D-alanine + ATP = D-alanyl-D-alanine + ADP + phosphate + H(+). It participates in cell wall biogenesis; peptidoglycan biosynthesis. Cell wall formation. This Pseudomonas aeruginosa (strain ATCC 15692 / DSM 22644 / CIP 104116 / JCM 14847 / LMG 12228 / 1C / PRS 101 / PAO1) protein is D-alanine--D-alanine ligase B.